Reading from the N-terminus, the 307-residue chain is Undecaprenyl-diphosphatase (307 aa).

6 helical membrane passes run 40–60, 79–99, 107–127, 183–203, 219–239, and 249–269; these read AAKT…VVYF, LRLA…GLLF, LFGP…MIGV, AAAA…ATVF, IVAL…VIAV, and LAPF…LWIA.

It belongs to the UppP family.

The protein localises to the cell inner membrane. The catalysed reaction is di-trans,octa-cis-undecaprenyl diphosphate + H2O = di-trans,octa-cis-undecaprenyl phosphate + phosphate + H(+). Functionally, catalyzes the dephosphorylation of undecaprenyl diphosphate (UPP). Confers resistance to bacitracin. This is Undecaprenyl-diphosphatase from Sorangium cellulosum (strain So ce56) (Polyangium cellulosum (strain So ce56)).